Reading from the N-terminus, the 331-residue chain is Ferredoxin--NADP reductase 2 (331 aa).

FAD is bound by residues Glu-37, Gln-45, Tyr-50, Val-90, Phe-124, Asp-285, and Thr-326.

This sequence belongs to the ferredoxin--NADP reductase type 2 family. As to quaternary structure, homodimer. It depends on FAD as a cofactor.

It carries out the reaction 2 reduced [2Fe-2S]-[ferredoxin] + NADP(+) + H(+) = 2 oxidized [2Fe-2S]-[ferredoxin] + NADPH. This chain is Ferredoxin--NADP reductase 2, found in Bacillus velezensis (strain DSM 23117 / BGSC 10A6 / LMG 26770 / FZB42) (Bacillus amyloliquefaciens subsp. plantarum).